Reading from the N-terminus, the 225-residue chain is Uracil phosphoribosyltransferase (225 aa).

36–40 (KGLVR) lines the GTP pocket. 5-phospho-alpha-D-ribose 1-diphosphate is bound by residues Arg86, Arg111, and 145–153 (DPMLATGST). Uracil is bound by residues Ile210 and 215-217 (GDA). A 5-phospho-alpha-D-ribose 1-diphosphate-binding site is contributed by Asp216.

Belongs to the UPRTase family. It depends on Mg(2+) as a cofactor.

It catalyses the reaction UMP + diphosphate = 5-phospho-alpha-D-ribose 1-diphosphate + uracil. The protein operates within pyrimidine metabolism; UMP biosynthesis via salvage pathway; UMP from uracil: step 1/1. Its activity is regulated as follows. Allosterically activated by GTP. Its function is as follows. Catalyzes the conversion of uracil and 5-phospho-alpha-D-ribose 1-diphosphate (PRPP) to UMP and diphosphate. This chain is Uracil phosphoribosyltransferase, found in Haloarcula marismortui (strain ATCC 43049 / DSM 3752 / JCM 8966 / VKM B-1809) (Halobacterium marismortui).